A 941-amino-acid polypeptide reads, in one-letter code: Glycine dehydrogenase (decarboxylating) (941 aa).

K692 carries the post-translational modification N6-(pyridoxal phosphate)lysine.

The protein belongs to the GcvP family. As to quaternary structure, the glycine cleavage system is composed of four proteins: P, T, L and H. Requires pyridoxal 5'-phosphate as cofactor.

It catalyses the reaction N(6)-[(R)-lipoyl]-L-lysyl-[glycine-cleavage complex H protein] + glycine + H(+) = N(6)-[(R)-S(8)-aminomethyldihydrolipoyl]-L-lysyl-[glycine-cleavage complex H protein] + CO2. The glycine cleavage system catalyzes the degradation of glycine. The P protein binds the alpha-amino group of glycine through its pyridoxal phosphate cofactor; CO(2) is released and the remaining methylamine moiety is then transferred to the lipoamide cofactor of the H protein. This is Glycine dehydrogenase (decarboxylating) from Mycobacterium bovis (strain ATCC BAA-935 / AF2122/97).